Here is a 254-residue protein sequence, read N- to C-terminus: Phosphoglycerate mutase 1 (254 aa).

Substrate-binding positions include 10–17 and 23–24; these read RHGESAWN and SG. Histidine 11 serves as the catalytic Tele-phosphohistidine intermediate. Residues serine 14 and serine 23 each carry the phosphoserine modification. Tyrosine 26 carries the post-translational modification Phosphotyrosine. Residue serine 31 is modified to Phosphoserine. Substrate-binding positions include arginine 62, 89–92, and lysine 100; that span reads ERHY. Catalysis depends on glutamate 89, which acts as the Proton donor/acceptor. N6-acetyllysine is present on lysine 106. Position 116-117 (116-117) interacts with substrate; it reads RR. Serine 118 carries the phosphoserine modification. Substrate is bound at residue 187 to 188; sequence GN. The residue at position 251 (lysine 251) is an N6-acetyllysine; alternate. Position 251 is an N6-succinyllysine; alternate (lysine 251). Lysine 253 and lysine 254 each carry N6-acetyllysine.

The protein belongs to the phosphoglycerate mutase family. BPG-dependent PGAM subfamily. In terms of assembly, homodimer. Acetylated at Lys-253, Lys-253 and Lys-254 under high glucose condition. Acetylation increases catalytic activity. Under glucose restriction SIRT1 levels dramatically increase and it deacetylates the enzyme. As to expression, expressed in the liver and brain. Not found in the muscle.

It catalyses the reaction (2R)-2-phosphoglycerate = (2R)-3-phosphoglycerate. The enzyme catalyses (2R)-3-phospho-glyceroyl phosphate = (2R)-2,3-bisphosphoglycerate + H(+). Functionally, catalyzes the interconversion of 2-phosphoglycerate and 3-phosphoglyceratea crucial step in glycolysis, by using 2,3-bisphosphoglycerate. Also catalyzes the interconversion of (2R)-2,3-bisphosphoglycerate and (2R)-3-phospho-glyceroyl phosphate. This chain is Phosphoglycerate mutase 1, found in Homo sapiens (Human).